The primary structure comprises 331 residues: Osmotic avoidance abnormal protein 8 (331 aa).

Positions 1 to 21 are cleaved as a signal peptide; sequence MPAKMLKWLLIHIFLIHSIFC.

As to expression, expressed in the hypodermal syncitium but not in hypodermal seam cells.

It localises to the secreted. Functionally, negative regulator of the osmotic stress response. Acts via the transmembrane protein ptr-23. This Caenorhabditis elegans protein is Osmotic avoidance abnormal protein 8 (osm-8).